The sequence spans 626 residues: Lipoprotein LpqB (626 aa).

An N-terminal signal peptide occupies residues 1 to 23; it reads MIGQANRIAAAVSTACLAVLLAG. Cys24 carries the N-palmitoyl cysteine lipid modification. Cys24 is lipidated: S-diacylglycerol cysteine. The tract at residues 428-457 is disordered; sequence EAEREEDLADDTEPGDTAVGSTERRETDRG. Positions 430 to 441 are enriched in acidic residues; that stretch reads EREEDLADDTEP.

Belongs to the LpqB lipoprotein family.

The protein resides in the cell membrane. This chain is Lipoprotein LpqB, found in Thermobifida fusca (strain YX).